The chain runs to 643 residues: Extracellular metalloproteinase 4 (643 aa).

Residues Met1–Ala18 form the signal peptide. Residues His19–Ala254 constitute a propeptide that is removed on maturation. Positions Thr47 to Asp57 are enriched in basic and acidic residues. Residues Thr47–Ser71 form a disordered region. Over residues Phe60–Ser71 the composition is skewed to polar residues. 2 N-linked (GlcNAc...) asparagine glycosylation sites follow: Asn271 and Asn420. His437 is a binding site for Zn(2+). Residue Glu438 is part of the active site. His441 lines the Zn(2+) pocket. N-linked (GlcNAc...) asparagine glycosylation is found at Asn510 and Asn553.

Belongs to the peptidase M36 family. The cofactor is Zn(2+).

The protein resides in the secreted. Secreted metalloproteinase probably acting as a virulence factor. In Arthroderma benhamiae (Trichophyton mentagrophytes), this protein is Extracellular metalloproteinase 4 (MEP4).